Consider the following 314-residue polypeptide: tRNA pseudouridine synthase B (314 aa).

Histidine 43 is a binding site for substrate. Residue aspartate 48 is the Nucleophile of the active site. Residues tyrosine 76, tyrosine 179, and leucine 200 each coordinate substrate.

It belongs to the pseudouridine synthase TruB family. Type 1 subfamily.

The enzyme catalyses uridine(55) in tRNA = pseudouridine(55) in tRNA. Functionally, responsible for synthesis of pseudouridine from uracil-55 in the psi GC loop of transfer RNAs. The sequence is that of tRNA pseudouridine synthase B from Shigella flexneri.